The sequence spans 132 residues: Outer membrane protein assembly factor BamE (132 aa).

Positions 1-16 are cleaved as a signal peptide; it reads MQKLVLTLLVTSLLAG. Cysteine 17 carries the N-palmitoyl cysteine lipid modification. Cysteine 17 carries S-diacylglycerol cysteine lipidation.

This sequence belongs to the BamE family. As to quaternary structure, part of the Bam complex.

It is found in the cell outer membrane. Its function is as follows. Part of the outer membrane protein assembly complex, which is involved in assembly and insertion of beta-barrel proteins into the outer membrane. The protein is Outer membrane protein assembly factor BamE of Acinetobacter pittii (strain PHEA-2).